Consider the following 839-residue polypeptide: Dynein axonemal assembly factor 5 (839 aa).

HEAT repeat units lie at residues Thr10 to Leu48, Gln54 to Arg92, Glu94 to Lys137, Ala140 to Glu178, His181 to Gly219, Ser221 to Asp257, Tyr259 to Lys297, Gly578 to Glu617, Leu675 to Arg713, Pro717 to Asp755, and Ile723 to Thr761.

Belongs to the DNAAF5 family. In terms of assembly, interacts with DNAI2; probably involved in outer arm dynein assembly.

Its subcellular location is the cytoplasm. It is found in the dynein axonemal particle. Functionally, cytoplasmic protein involved in the delivery of the dynein machinery to the motile cilium. It is required for the assembly of the axonemal dynein inner and outer arms, two structures attached to the peripheral outer doublet A microtubule of the axoneme, that play a crucial role in cilium motility. The protein is Dynein axonemal assembly factor 5 of Xenopus laevis (African clawed frog).